The chain runs to 233 residues: Uridylate kinase (233 aa).

ATP contacts are provided by residues 8–11 (KLSG), glycine 51, and arginine 55. UMP contacts are provided by residues aspartate 68 and 129 to 136 (TSNPFFTT). The ATP site is built by threonine 156, tyrosine 162, and aspartate 165.

Belongs to the UMP kinase family. As to quaternary structure, homohexamer.

The protein resides in the cytoplasm. The catalysed reaction is UMP + ATP = UDP + ADP. It functions in the pathway pyrimidine metabolism; CTP biosynthesis via de novo pathway; UDP from UMP (UMPK route): step 1/1. Its activity is regulated as follows. Inhibited by UTP. Functionally, catalyzes the reversible phosphorylation of UMP to UDP. The chain is Uridylate kinase from Pseudothermotoga lettingae (strain ATCC BAA-301 / DSM 14385 / NBRC 107922 / TMO) (Thermotoga lettingae).